The following is a 633-amino-acid chain: Phosphomethylpyrimidine synthase (633 aa).

Residues Asn-245, Met-274, Tyr-303, His-339, 359–361, 400–403, and Glu-439 each bind substrate; these read SRG and DGLR. Residue His-443 coordinates Zn(2+). Residue Tyr-466 participates in substrate binding. His-507 provides a ligand contact to Zn(2+). [4Fe-4S] cluster is bound by residues Cys-587, Cys-590, and Cys-595.

The protein belongs to the ThiC family. Homodimer. Requires [4Fe-4S] cluster as cofactor.

It carries out the reaction 5-amino-1-(5-phospho-beta-D-ribosyl)imidazole + S-adenosyl-L-methionine = 4-amino-2-methyl-5-(phosphooxymethyl)pyrimidine + CO + 5'-deoxyadenosine + formate + L-methionine + 3 H(+). Its pathway is cofactor biosynthesis; thiamine diphosphate biosynthesis. Its function is as follows. Catalyzes the synthesis of the hydroxymethylpyrimidine phosphate (HMP-P) moiety of thiamine from aminoimidazole ribotide (AIR) in a radical S-adenosyl-L-methionine (SAM)-dependent reaction. The protein is Phosphomethylpyrimidine synthase of Neisseria meningitidis serogroup C (strain 053442).